A 182-amino-acid polypeptide reads, in one-letter code: Meiotic recombination protein REC104 (182 aa).

As to quaternary structure, interacts with REC114 and SPO11.

Potential transcriptional regulator that is required to activate expression of a number of early meiotic genes including HOP1. The chain is Meiotic recombination protein REC104 (REC104) from Saccharomyces cerevisiae (strain ATCC 204508 / S288c) (Baker's yeast).